Consider the following 1028-residue polypeptide: RNA cytidine acetyltransferase 1 (1028 aa).

ATP-binding positions include 286-295 (GRGKSAALGL) and arginine 460. The N-acetyltransferase domain maps to 548–731 (VLLGPVDESK…FAPFYISQIP (184 aa)). Acetyl-CoA-binding positions include 619–621 (IAV), 626–632 (MKMGYGS), and lysine 719. Positions 989–1028 (ISIESTKTDNKKEKPSGFDKSAKKRGNDKHSSTSNKKRRA) are disordered. The span at 994-1009 (TKTDNKKEKPSGFDKS) shows a compositional bias: basic and acidic residues.

It belongs to the RNA cytidine acetyltransferase family. NAT10 subfamily.

It is found in the nucleus. Its subcellular location is the nucleolus. It carries out the reaction a cytidine in 18S rRNA + acetyl-CoA + ATP + H2O = an N(4)-acetylcytidine in 18S rRNA + ADP + phosphate + CoA + H(+). The catalysed reaction is a cytidine in tRNA + acetyl-CoA + ATP + H2O = an N(4)-acetylcytidine in tRNA + ADP + phosphate + CoA + H(+). Functionally, RNA cytidine acetyltransferase with specificity toward both 18S rRNA and tRNAs. Catalyzes the formation of N(4)-acetylcytidine (ac4C) in 18S rRNA. Required for early nucleolar cleavages of precursor rRNA at sites A0, A1 and A2 during 18S rRNA synthesis. Catalyzes the formation of ac4C in serine and leucine tRNAs. Requires a tRNA-binding adapter protein for full tRNA acetyltransferase activity but not for 18S rRNA acetylation. The chain is RNA cytidine acetyltransferase 1 from Arabidopsis thaliana (Mouse-ear cress).